The chain runs to 143 residues: Transmembrane protein 207 (143 aa).

The signal sequence occupies residues 1 to 29; it reads MSTSSPFRVASKIVTAGCLCLPLFQRVLS. Residues 52–72 form a helical membrane-spanning segment; the sequence is IWFFLLIFLVVLLCGVVLFCL.

As to quaternary structure, interacts with WWOX.

The protein resides in the membrane. This chain is Transmembrane protein 207, found in Mus musculus (Mouse).